A 388-amino-acid polypeptide reads, in one-letter code: Chorismate synthase (388 aa).

The NADP(+) site is built by arginine 39 and arginine 45. FMN-binding positions include 130–132 (RSS), 251–252 (NA), glycine 296, 311–315 (KPIPT), and arginine 337.

This sequence belongs to the chorismate synthase family. Homotetramer. Requires FMNH2 as cofactor.

It carries out the reaction 5-O-(1-carboxyvinyl)-3-phosphoshikimate = chorismate + phosphate. Its pathway is metabolic intermediate biosynthesis; chorismate biosynthesis; chorismate from D-erythrose 4-phosphate and phosphoenolpyruvate: step 7/7. In terms of biological role, catalyzes the anti-1,4-elimination of the C-3 phosphate and the C-6 proR hydrogen from 5-enolpyruvylshikimate-3-phosphate (EPSP) to yield chorismate, which is the branch point compound that serves as the starting substrate for the three terminal pathways of aromatic amino acid biosynthesis. This reaction introduces a second double bond into the aromatic ring system. The sequence is that of Chorismate synthase from Lactococcus lactis subsp. lactis (strain IL1403) (Streptococcus lactis).